A 158-amino-acid polypeptide reads, in one-letter code: Transcriptional repressor NrdR (158 aa).

Residues 3-34 fold into a zinc finger; that stretch reads CPSCQNTDSRVLESRAADAGRSVRRRRECLHC. The ATP-cone domain occupies 49–139; it reads ITVLKRNGNR…VYRDFRGVND (91 aa).

The protein belongs to the NrdR family. Requires Zn(2+) as cofactor.

Negatively regulates transcription of bacterial ribonucleotide reductase nrd genes and operons by binding to NrdR-boxes. The chain is Transcriptional repressor NrdR from Prochlorococcus marinus (strain MIT 9313).